A 434-amino-acid polypeptide reads, in one-letter code: Beta-enolase (434 aa).

An N-acetylalanine modification is found at Ala-2. Thr-72 is modified (phosphothreonine). A phosphoserine mark is found at Ser-83 and Ser-157. Substrate is bound by residues His-158 and Glu-167. At Ser-176 the chain carries Phosphoserine. Thr-205 is subject to Phosphothreonine. Residue Glu-210 is the Proton donor of the active site. Position 229 is a phosphothreonine (Thr-229). At Tyr-236 the chain carries Phosphotyrosine. Asp-245 serves as a coordination point for Mg(2+). Ser-263 is modified (phosphoserine). Positions 293 and 318 each coordinate substrate. Mg(2+) contacts are provided by Glu-293 and Asp-318. Lys-343 functions as the Proton acceptor in the catalytic mechanism. Substrate contacts are provided by residues 370–373 and Lys-394; that span reads SHRS.

The protein belongs to the enolase family. As to quaternary structure, mammalian enolase is composed of 3 isozyme subunits, alpha, beta and gamma, which can form homodimers or heterodimers which are cell-type and development-specific. Interacts with PNKD. The cofactor is Mg(2+).

The protein resides in the cytoplasm. It catalyses the reaction (2R)-2-phosphoglycerate = phosphoenolpyruvate + H2O. It participates in carbohydrate degradation; glycolysis; pyruvate from D-glyceraldehyde 3-phosphate: step 4/5. In terms of biological role, glycolytic enzyme that catalyzes the conversion of 2-phosphoglycerate to phosphoenolpyruvate. Appears to have a function in striated muscle development and regeneration. This is Beta-enolase (ENO3) from Sus scrofa (Pig).